The sequence spans 172 residues: uncharacterized protein (172 aa).

Residues 21 to 75 enclose the HTH cro/C1-type domain; sequence FKRILLELGLTLKEFSEISGIPYSTLYKVIQGKDFRVSTLIKILKTIRSFEKDEN. The segment at residues 32 to 51 is a DNA-binding region (H-T-H motif); it reads LKEFSEISGIPYSTLYKVIQ.

This is an uncharacterized protein from Methanocaldococcus jannaschii (strain ATCC 43067 / DSM 2661 / JAL-1 / JCM 10045 / NBRC 100440) (Methanococcus jannaschii).